We begin with the raw amino-acid sequence, 380 residues long: Alcohol dehydrogenase 2 (380 aa).

Positions 48, 50, 70, 100, 103, 106, 114, and 178 each coordinate Zn(2+). 2 residues coordinate an alcohol: threonine 50 and histidine 70. Threonine 50 serves as a coordination point for NAD(+). NAD(+) is bound by residues 203–208 (GLGAVG), aspartate 227, arginine 232, threonine 273, valine 296, 296–298 (VGV), phenylalanine 323, and arginine 373.

This sequence belongs to the zinc-containing alcohol dehydrogenase family. In terms of assembly, homodimer. Homotetramer. Zn(2+) serves as cofactor.

The protein localises to the cytoplasm. It catalyses the reaction a primary alcohol + NAD(+) = an aldehyde + NADH + H(+). It carries out the reaction a secondary alcohol + NAD(+) = a ketone + NADH + H(+). The polypeptide is Alcohol dehydrogenase 2 (ADH2) (Solanum lycopersicum (Tomato)).